A 322-amino-acid polypeptide reads, in one-letter code: MNADAVQQYQHRTVLLDEAVDALALGGERANGVYVDGTFGRGGHSRKILQQLGSGARLLAFDKDTQAIANAATIDDQRFEIAHDSFATLSEALAVRGIKQVDGVLLDLGISSPQVDDATRGFSFRADGPLDMRMDTTRGMSAAEWLATETEQKIEKVIREYGEERFAFQIAKAIVARRAVEPISSTRQLAEIVARTVKTREKGKDPATRTFQAIRIFINQELEELEVVLNEAYRYLAPHGRLVVISFHSLEDRIVKQFMAGKANVPQPDRRLPIRAIDLPQPEMKLLSRVKPSAAEISENPRARSAVMRVAERLSPAARVVQ.

S-adenosyl-L-methionine contacts are provided by residues Gly42–His44, Asp62, Phe86, Asp107, and Gln114.

This sequence belongs to the methyltransferase superfamily. RsmH family.

The protein localises to the cytoplasm. The catalysed reaction is cytidine(1402) in 16S rRNA + S-adenosyl-L-methionine = N(4)-methylcytidine(1402) in 16S rRNA + S-adenosyl-L-homocysteine + H(+). In terms of biological role, specifically methylates the N4 position of cytidine in position 1402 (C1402) of 16S rRNA. This is Ribosomal RNA small subunit methyltransferase H from Janthinobacterium sp. (strain Marseille) (Minibacterium massiliensis).